The sequence spans 609 residues: MDRSFDYVKINLASPSRIREWGERKLPNGQVVGEITKPETINYRTLKPEMNGLFCERVFGPVNDWECHCGKYKRIRHKGIVCERCGVEIIDSKVRRHRMGFIELASSVTHVWYVKGRPSKIALILGMTVKELEQIVYFNSYVVTKANKDLNLSYQQLLSEADWLAIDYNDDFSLKENTISIGAEAIKTLLKNVDLQQSASEIRELLPFAKRFFSEKLIRRLRVINQFIASKFDPTWMILDILPVLPPDLRPMVQLDGGRFATSDLNDLYRRVINRNNRLARLQEIVAPELIIRNEKRMLQEAVDALIDNGKRGRAVVGLNNRPLKSLSDIIEGKQGRFRQNLLGKRVDYSGRSVIIVGPELKLNQCGLPSEMAIELFQPFVIHRLIYEGLVNNIKAAKSIIQKNGPLAWEILANVMEGHPILLNRAPTLHRLGIQSFEPILVSGRAIRLHPLVCPAFNADFDGDQMAVHIPLSLEAQSEARLLMLAPNNFLSPATGDAILTPSQDMVLGCFYLTANNPSQQLNKNHYFSDFEDAILAYQNSQIHLHTFIWVRCNNVDLTEDETCSQTQSGNLILTHGADIKSKQSSSQDTKTKYIRTTPGRILLNEIFQ.

Zn(2+) contacts are provided by Cys-67, Cys-69, Cys-82, and Cys-85. Mg(2+) is bound by residues Asp-460, Asp-462, and Asp-464.

This sequence belongs to the RNA polymerase beta' chain family. RpoC1 subfamily. In terms of assembly, in plastids the minimal PEP RNA polymerase catalytic core is composed of four subunits: alpha, beta, beta', and beta''. When a (nuclear-encoded) sigma factor is associated with the core the holoenzyme is formed, which can initiate transcription. The cofactor is Mg(2+). Requires Zn(2+) as cofactor.

It localises to the plastid. Its subcellular location is the chloroplast. It catalyses the reaction RNA(n) + a ribonucleoside 5'-triphosphate = RNA(n+1) + diphosphate. DNA-dependent RNA polymerase catalyzes the transcription of DNA into RNA using the four ribonucleoside triphosphates as substrates. This Emiliania huxleyi (Coccolithophore) protein is DNA-directed RNA polymerase subunit beta'.